Consider the following 284-residue polypeptide: 2-dehydro-3-deoxyphosphooctonate aldolase (284 aa).

This sequence belongs to the KdsA family.

It is found in the cytoplasm. The catalysed reaction is D-arabinose 5-phosphate + phosphoenolpyruvate + H2O = 3-deoxy-alpha-D-manno-2-octulosonate-8-phosphate + phosphate. Its pathway is carbohydrate biosynthesis; 3-deoxy-D-manno-octulosonate biosynthesis; 3-deoxy-D-manno-octulosonate from D-ribulose 5-phosphate: step 2/3. The protein operates within bacterial outer membrane biogenesis; lipopolysaccharide biosynthesis. In Salmonella enteritidis PT4 (strain P125109), this protein is 2-dehydro-3-deoxyphosphooctonate aldolase.